The following is a 462-amino-acid chain: Ubiquitin carboxyl-terminal hydrolase calypso (462 aa).

One can recognise a UCH catalytic domain in the interval 29–260; it reads GWLELESDPG…IRFNLMAVVP (232 aa). The active-site Nucleophile is the cysteine 115. The Proton donor role is filled by histidine 197. In terms of domain architecture, ULD spans 357-385; sequence NYDKFICTFLTMLAHQGVLGELVSQHLLP. The interval 387-462 is positively charged C-terminal tail required for binding nucleosomes; the sequence is KKISGQSAAN…KGRNKCRKRK (76 aa). Residues 394–462 are disordered; it reads AANRLNKQNS…KGRNKCRKRK (69 aa). Positions 399-447 are enriched in low complexity; the sequence is NKQNSAAASTANSSAGATAGGAKSQQQQQQQQQPQQPQTPKNGKSPGKT. Residues 448–462 are compositionally biased toward basic residues; that stretch reads PGRRRKGRNKCRKRK.

Belongs to the peptidase C12 family. BAP1 subfamily. In terms of assembly, catalytic component of the polycomb repressive deubiquitinase (PR-DUB) complex, at least composed of caly/calypso, Asx and sba (MBD5/6 homolog). The PR-DUB complex associates with nucleosomes to mediate deubiquitination of histone H2AK118ub1 substrates; the association requires the positively charged C-terminal tail of caly, probably due to direct binding of DNA. Interacts (via ULD domain) with Asx (via DEUBAD domain); the interaction produces a stable heterodimer with a composite binding site for ubiquitin. Homodimerizes (via coiled-coil hinge-region between the UCH and ULD domains) to mediate assembly of 2 copies of the caly-Asx heterodimer into a bisymmetric tetramer; dimerization enhances PR-DUB association with nucleosomes.

It localises to the nucleus. The enzyme catalyses Thiol-dependent hydrolysis of ester, thioester, amide, peptide and isopeptide bonds formed by the C-terminal Gly of ubiquitin (a 76-residue protein attached to proteins as an intracellular targeting signal).. Catalytic component of the polycomb repressive deubiquitinase (PR-DUB) complex, a complex that specifically mediates deubiquitination of histone H2A monoubiquitinated at 'Lys-119' (H2AK118ub1). Mediates bisymmetric organization of the PR-DUB complex and is involved in association with nucleosomes to mediate deubiquitination. Does not deubiquitinate monoubiquitinated histone H2B. Required to maintain the transcriptionally repressive state of homeotic genes throughout development. The PR-DUB complex has weak or no activity toward 'Lys-48'- and 'Lys-63'-linked polyubiquitin chains. Polycomb group (PcG) protein. The chain is Ubiquitin carboxyl-terminal hydrolase calypso from Drosophila virilis (Fruit fly).